Here is a 434-residue protein sequence, read N- to C-terminus: Septin-6 (434 aa).

Position 2 is an N-acetylalanine (A2). Phosphoserine is present on S27. The Septin-type G domain maps to 39–305 (QGFCFNILCV…ELYRRCKLEE (267 aa)). Residues 49–56 (GETGLGKS) form a G1 motif region. Residues 49–56 (GETGLGKS), G104, 185–193 (KADAISKSE), G239, and R254 contribute to the GTP site. The tract at residues 101–104 (STVG) is G3 motif. The tract at residues 184–187 (AKAD) is G4 motif. Positions 321 to 409 (QETYEAKRNE…KTAAELLQSQ (89 aa)) form a coiled coil. K367 carries the post-translational modification N6-acetyllysine. Residues 405–434 (LLQSQGSQAGGSQTLKRDKEKKNNPWLCTE) form a disordered region. Residues 407–417 (QSQGSQAGGSQ) show a composition bias toward low complexity. Residue S416 is modified to Phosphoserine. T418 is modified (phosphothreonine).

This sequence belongs to the TRAFAC class TrmE-Era-EngA-EngB-Septin-like GTPase superfamily. Septin GTPase family. Septins polymerize into heterooligomeric protein complexes that form filaments, and associate with cellular membranes, actin filaments and microtubules. GTPase activity is required for filament formation. Filaments are assembled from asymmetrical heterotrimers, composed of SEPTIN2, SEPTIN6 and SEPTIN7 that associate head-to-head to form a hexameric unit. Within the trimer, directly interacts with SEPTIN2 and SEPTIN7. Also interacts with SEPTIN9 and SEPTIN12. Interaction with SEPTIN12 alters filament structure. Component of a septin core octameric complex consisting of SEPTIN12, SEPTIN7, SEPTIN6 and SEPTIN2 or SEPTIN4 in the order 12-7-6-2-2-6-7-12 or 12-7-6-4-4-6-7-12 and located in the sperm annulus. Interacts with SOCS7. Interacts with HNRNPA1. As to quaternary structure, (Microbial infection) Interacts with HCV NS5B. Widely expressed.

Its subcellular location is the cytoplasm. It localises to the cytoskeleton. It is found in the spindle. The protein localises to the chromosome. The protein resides in the centromere. Its subcellular location is the kinetochore. It localises to the cleavage furrow. It is found in the midbody. The protein localises to the cell projection. The protein resides in the cilium. Its subcellular location is the flagellum. In terms of biological role, filament-forming cytoskeletal GTPase. Required for normal organization of the actin cytoskeleton. Involved in cytokinesis. May play a role in HCV RNA replication. Forms a filamentous structure with SEPTIN12, SEPTIN6, SEPTIN2 and probably SEPTIN4 at the sperm annulus which is required for the structural integrity and motility of the sperm tail during postmeiotic differentiation. The protein is Septin-6 of Homo sapiens (Human).